A 409-amino-acid chain; its full sequence is Multifunctional CCA protein (409 aa).

Residues G8 and R11 each contribute to the ATP site. Residues G8 and R11 each contribute to the CTP site. Residues D21 and D23 each coordinate Mg(2+). ATP contacts are provided by R91, R137, and R140. R91, R137, and R140 together coordinate CTP. The HD domain occupies 228–329; it reads TGVHTLSVLE…LELLQSFDVY (102 aa).

Belongs to the tRNA nucleotidyltransferase/poly(A) polymerase family. Bacterial CCA-adding enzyme type 1 subfamily. As to quaternary structure, monomer. Can also form homodimers and oligomers. Mg(2+) serves as cofactor. It depends on Ni(2+) as a cofactor.

It catalyses the reaction a tRNA precursor + 2 CTP + ATP = a tRNA with a 3' CCA end + 3 diphosphate. The enzyme catalyses a tRNA with a 3' CCA end + 2 CTP + ATP = a tRNA with a 3' CCACCA end + 3 diphosphate. Catalyzes the addition and repair of the essential 3'-terminal CCA sequence in tRNAs without using a nucleic acid template. Adds these three nucleotides in the order of C, C, and A to the tRNA nucleotide-73, using CTP and ATP as substrates and producing inorganic pyrophosphate. tRNA 3'-terminal CCA addition is required both for tRNA processing and repair. Also involved in tRNA surveillance by mediating tandem CCA addition to generate a CCACCA at the 3' terminus of unstable tRNAs. While stable tRNAs receive only 3'-terminal CCA, unstable tRNAs are marked with CCACCA and rapidly degraded. The protein is Multifunctional CCA protein of Pseudomonas fluorescens (strain SBW25).